The chain runs to 441 residues: Cortexillin-2 (441 aa).

The interval 1–229 is actin-binding; sequence MDLNKEWEKV…VLYTSLFFHA (229 aa). 2 Calponin-homology (CH) domains span residues 9-117 and 126-231; these read KVQE…RKYR and KSSE…HAFR. 2 coiled-coil regions span residues 229 to 362 and 406 to 430; these read AFRA…RLGL and SFEE…KYLN.

It belongs to the cortexillin family. As to quaternary structure, homodimer; parallel.

It localises to the cytoplasm. The protein localises to the cytoskeleton. In terms of biological role, actin-bundling protein. When linked to F-actin the actin filaments form preferentially anti-parallel bundles that associate into meshworks. Plays a major role in cytokinesis. Negatively regulates cortical localization of rapgap1. In Dictyostelium discoideum (Social amoeba), this protein is Cortexillin-2 (ctxB).